The primary structure comprises 631 residues: MAANNSIEWRAVCEKFRLAQELSEIESKKDPENNPFRSKYKARDLLKEIHCSLKKIEIEEQGEAGDEADCESSQTADGEPEDGFEKTFTGDSAAGLRAARLAVLQYHLGVNHIETEELSAGELHLMVCMKLIDKCTTTRENVSLFIHVRNQLGILWAGRDEIEKAQGFLEIAETMYLVYMKEDGQPPLDLQDFFVPEGEELSQQEKIRRFEMAYTHTLYYLAQVYKNLQQYERAAQYCHSTLQRQLEYKQFAPLEWAINAATLSQYYITKTRYMEARHCLAAASVIANLAGEIPSEAAAKESEAESEKREELLQKRAEIARCWIKYCLNLLQDAKKLLEDNIGELDLDRQDELKRARRNEEEEKEKGRKSAILFGSSDTFDSICSLEEKVSSMLPLEFEEARSIFLVGQSYVTQAKEYFAMDGHVTDHIEILQDHSALFKVLAFFEEDLERRCKMHKRRVDMLEPICKDLNAQYYLLICRQLQFELAETYYEMMDLKLAVADKLDQPDVHTIKKFNHLCSSSMKYYQMFLDSTRSPEGKFPEKLEDDLLRPALVAKFRVARLHSKLISSNLATQMENLSLSLESYNFVVQYCEENPEAKNAVETELELSMEMVSLLPLKINRIRSTLASSK.

Acidic residues predominate over residues 60–70; that stretch reads EQGEAGDEADC. The interval 60-88 is disordered; that stretch reads EQGEAGDEADCESSQTADGEPEDGFEKTF.

This sequence belongs to the KIF-binding protein family. As to expression, at 30 hpf, primarily expressed in central and peripheral neurons.

It is found in the cytoplasm. Its subcellular location is the cytoskeleton. Its function is as follows. Activator of KIF1B plus-end-directed microtubule motor activity. Required for organization of axonal microtubules, and axonal outgrowth and maintenance during peripheral and central nervous system development. The chain is KIF-binding protein (kifbp) from Danio rerio (Zebrafish).